The sequence spans 520 residues: Cyclin-L2 (520 aa).

Cyclin-like regions lie at residues 81–183 (ELIQ…RVLK) and 196–280 (KIIV…KILQ). Residues 309–520 (RAKGLLPPGS…DHPGHSRHRR (212 aa)) form a disordered region. 4 positions are modified to phosphoserine: Ser330, Ser337, Ser347, and Ser350. The span at 356–366 (RKMEGPKKAKG) shows a compositional bias: basic and acidic residues. Ser368 is modified (phosphoserine). The interval 384–422 (RSREQSYSRSPSRSASPKRRKSDSGSTSGGSKSQSRSRS) is RS. Positions 407 to 429 (SGSTSGGSKSQSRSRSRSDSPPR) are enriched in low complexity. The span at 440–453 (SEVRGSRKSKDCKH) shows a compositional bias: basic and acidic residues. Basic residues predominate over residues 454-471 (LTQKPHKSRSRSSSRSRS). Basic and acidic residues-rich tracts occupy residues 472-481 (RSRERTDSSG) and 489-514 (YYRD…DHPG).

Belongs to the cyclin family. Cyclin L subfamily. Interacts with CDK11A, CDK11B, CDK12, CDK13 and POLR2A, the hyperphosphorylated C-terminal domain (CTD) of RNA polymerase II. May form a ternary complex with CDK11B and casein kinase II (CKII). Interacts with pre-mRNA-splicing factors, including at least SRSF1, SRSF2 and SRSF7/SLU7.

Its subcellular location is the nucleus speckle. It localises to the nucleus. The protein localises to the nucleoplasm. Functionally, involved in pre-mRNA splicing. May induce cell death, possibly by acting on the transcription and RNA processing of apoptosis-related factors. In Rattus norvegicus (Rat), this protein is Cyclin-L2 (Ccnl2).